The following is a 157-amino-acid chain: Phosphopantetheine adenylyltransferase (157 aa).

T10 serves as a coordination point for substrate. Residues 10-11 (TF) and H18 each bind ATP. Residues K42, L74, and R88 each coordinate substrate. ATP is bound by residues 89 to 91 (GLR), E99, and 124 to 130 (NAFISSS).

It belongs to the bacterial CoaD family. Homohexamer. Mg(2+) serves as cofactor.

It localises to the cytoplasm. The catalysed reaction is (R)-4'-phosphopantetheine + ATP + H(+) = 3'-dephospho-CoA + diphosphate. Its pathway is cofactor biosynthesis; coenzyme A biosynthesis; CoA from (R)-pantothenate: step 4/5. In terms of biological role, reversibly transfers an adenylyl group from ATP to 4'-phosphopantetheine, yielding dephospho-CoA (dPCoA) and pyrophosphate. This Helicobacter pylori (strain J99 / ATCC 700824) (Campylobacter pylori J99) protein is Phosphopantetheine adenylyltransferase.